A 199-amino-acid chain; its full sequence is NAD(P)H dehydrogenase (quinone) (199 aa).

The Flavodoxin-like domain occupies I4 to V190. Residues S10–I15 and T79–F81 contribute to the FMN site. Residue Y12 coordinates NAD(+). W99 is a substrate binding site. FMN contacts are provided by residues S114–G119 and H134.

It belongs to the WrbA family. FMN serves as cofactor.

The catalysed reaction is a quinone + NADH + H(+) = a quinol + NAD(+). The enzyme catalyses a quinone + NADPH + H(+) = a quinol + NADP(+). This is NAD(P)H dehydrogenase (quinone) from Yersinia pseudotuberculosis serotype O:1b (strain IP 31758).